A 109-amino-acid chain; its full sequence is MTYVVNDECVKCKYTDCVDVCPVDCFYEGEFMLVINPDECIDCGVCVPDCPIDAIKPESPELIEWVERAKDFIENKGWKNITKKKPALPDADKFKDEKNKFNKYINNMN.

4Fe-4S ferredoxin-type domains lie at 2–30 and 31–60; these read TYVV…YEGE and FMLV…PESP. [3Fe-4S] cluster contacts are provided by cysteine 9 and cysteine 17. Cysteine 21, cysteine 40, cysteine 43, and cysteine 46 together coordinate [4Fe-4S] cluster. Residue cysteine 50 participates in [3Fe-4S] cluster binding.

Requires [4Fe-4S] cluster as cofactor. It depends on [3Fe-4S] cluster as a cofactor.

Ferredoxins are iron-sulfur proteins that transfer electrons in a wide variety of metabolic reactions. The polypeptide is Ferredoxin (fdxA) (Rickettsia felis (strain ATCC VR-1525 / URRWXCal2) (Rickettsia azadi)).